The sequence spans 216 residues: Snake venom metalloproteinase HT-1 (216 aa).

The Disintegrin domain maps to P8–N94. Residues V10, N13, L15, E17, E20, and D23 each contribute to the Ca(2+) site. 14 disulfide bridges follow: C11-C40, C22-C35, C24-C30, C34-C57, C48-C54, C53-C79, C66-C86, C73-C105, C98-C110, C117-C167, C132-C178, C145-C155, C162-C204, and C198-C209. Positions E72 to D74 match the D/ECD-tripeptide motif. N175 carries N-linked (GlcNAc...) asparagine glycosylation.

The protein belongs to the venom metalloproteinase (M12B) family. P-III subfamily. P-IIIa sub-subfamily. Monomer. Zn(2+) is required as a cofactor. Expressed by the venom gland.

It localises to the secreted. Its function is as follows. Zinc protease from snake venom that induces hemorrhage. This Crotalus ruber ruber (Red diamond rattlesnake) protein is Snake venom metalloproteinase HT-1.